We begin with the raw amino-acid sequence, 326 residues long: Microtubule-associated protein RP/EB family member 2 (326 aa).

S9 is modified (phosphoserine). Positions 56 to 158 (TMSRHDIIAW…FIQWFKKFYD (103 aa)) constitute a Calponin-homology (CH) domain. Y166 carries the phosphotyrosine modification. 2 disordered regions span residues 170–239 (EARQ…DKDL) and 297–326 (YASD…QEEY). Positions 186 to 326 (QIFNLPKKSH…DQQPQQQEEY (141 aa)) are DCTN1-binding. Residues 199–233 (SPTAGAAKSSPASKPGSTPSRPSSAKRASSSGSAS) are compositionally biased toward low complexity. A phosphoserine mark is found at S218 and S235. Positions 235 to 305 (SDKDLETQVI…LYASDEQEGQ (71 aa)) constitute an EB1 C-terminal domain. Residues 258–301 (EGVEKERDFYFGKLREIELLCQEHGQENDDLVQRLMEVLYASDE) form an APC-binding region. Positions 300 to 312 (DEQEGQTEEPEAE) are enriched in acidic residues. Over residues 317–326 (DQQPQQQEEY) the composition is skewed to low complexity.

It belongs to the MAPRE family. As to quaternary structure, interacts with DCTN1. Interacts with APC (via C-terminal). Interacts with monomeric and polymerized tubulin. Interacts with SLAIN1. Interacts (via the N-terminal region) with BAG1. Interacts with ASB14. Ubiquitinated in an ASB14-dependent manner; leading to proteasomal degradation. Post-translationally, phosphorylated at Ser-235 by CK2 leading to enhanced cell adhesion. Phosphorylated by CDK1 and AURKB during mitosis reduces the binding affinity of MAPRE2 for microtubules. In terms of tissue distribution, expressed during early stages of apico-basal epithelial differentiation but down-regulated in most cells at later stages.

The protein localises to the cytoplasm. It localises to the cytoskeleton. Its subcellular location is the spindle. Functionally, adapter protein that is involved in microtubule polymerization, and spindle function by stabilizing microtubules and anchoring them at centrosomes. Therefore, ensures mitotic progression and genome stability. Acts as a central regulator of microtubule reorganization in apico-basal epithelial differentiation. Plays a role during oocyte meiosis by regulating microtubule dynamics. Participates in neurite growth by interacting with plexin B3/PLXNB3 and microtubule reorganization during apico-basal epithelial differentiation. Plays also an essential role for cell migration and focal adhesion dynamics. Mechanistically, recruits HAX1 to microtubules in order to regulate focal adhesion dynamics. This Mus musculus (Mouse) protein is Microtubule-associated protein RP/EB family member 2 (Mapre2).